A 414-amino-acid chain; its full sequence is Serine hydroxymethyltransferase (414 aa).

Residues Leu121 and 125 to 127 (GHL) contribute to the (6S)-5,6,7,8-tetrahydrofolate site. Lys229 bears the N6-(pyridoxal phosphate)lysine mark.

It belongs to the SHMT family. Homodimer. It depends on pyridoxal 5'-phosphate as a cofactor.

The protein localises to the cytoplasm. The enzyme catalyses (6R)-5,10-methylene-5,6,7,8-tetrahydrofolate + glycine + H2O = (6S)-5,6,7,8-tetrahydrofolate + L-serine. Its pathway is one-carbon metabolism; tetrahydrofolate interconversion. It functions in the pathway amino-acid biosynthesis; glycine biosynthesis; glycine from L-serine: step 1/1. Catalyzes the reversible interconversion of serine and glycine with tetrahydrofolate (THF) serving as the one-carbon carrier. This reaction serves as the major source of one-carbon groups required for the biosynthesis of purines, thymidylate, methionine, and other important biomolecules. Also exhibits THF-independent aldolase activity toward beta-hydroxyamino acids, producing glycine and aldehydes, via a retro-aldol mechanism. The sequence is that of Serine hydroxymethyltransferase from Verminephrobacter eiseniae (strain EF01-2).